We begin with the raw amino-acid sequence, 559 residues long: Poly(3-hydroxyalkanoate) polymerase 1 (559 aa).

Residue Cys296 is part of the active site.

This sequence belongs to the PHA/PHB synthase family. Type II PhaC subfamily.

It participates in biopolymer metabolism; poly-(R)-3-hydroxybutanoate biosynthesis. In terms of biological role, synthesizes poly(3-hydroxyalkanoates) (PHA), complements a mutant of P.putida that does not make PHA. The polypeptide is Poly(3-hydroxyalkanoate) polymerase 1 (Ectopseudomonas oleovorans (Pseudomonas oleovorans)).